The following is a 161-amino-acid chain: Peroxynitrite isomerase 2 (161 aa).

The GXWXGXG motif lies at 17-23; sequence GTWAGQG. H152 contributes to the heme b binding site.

It belongs to the nitrobindin family. Homodimer. Heme b is required as a cofactor.

It carries out the reaction peroxynitrite = nitrate. The protein operates within nitrogen metabolism. Functionally, heme-binding protein able to scavenge peroxynitrite and to protect free L-tyrosine against peroxynitrite-mediated nitration, by acting as a peroxynitrite isomerase that converts peroxynitrite to nitrate. Therefore, this protein likely plays a role in peroxynitrite sensing and in the detoxification of reactive nitrogen and oxygen species (RNS and ROS, respectively). Is able to bind nitric oxide (NO) in vitro, but may act as a sensor of peroxynitrite levels in vivo. The polypeptide is Peroxynitrite isomerase 2 (Mycobacterium marinum (strain ATCC BAA-535 / M)).